Here is a 209-residue protein sequence, read N- to C-terminus: MRSTILLFCLLGSTRSLPQLKPALGLPPTKLAPDQGTLPNQQQSNQVFPSLSLIPLTQMLTLGPDLHLLNPAAGMTPGTQTHPLTLGGLNVQQQLHPHVLPIFVTQLGAQGTILSSEELPQIFTSLIIHSLFPGGILPTSQAGANPDVQDGSLPAGGAGVNPATQGTPAGRLPTPSGTDDDFAVTTPAGIQRSTHAIEEATTESANGIQ.

Positions 1–16 (MRSTILLFCLLGSTRS) are cleaved as a signal peptide. Positions 142–209 (AGANPDVQDG…ATTESANGIQ (68 aa)) are disordered.

It belongs to the amelotin family. Post-translationally, phosphorylated by FAM20C in vitro. In terms of processing, O-glycosylated.

The protein localises to the secreted. In terms of biological role, is a promoter of calcium phosphate mineralization, playing a critical role in the formation of the compact, mineralized, aprismatic enamel surface layer during the maturation stage of amelogenesis. This Homo sapiens (Human) protein is Amelotin (AMTN).